The sequence spans 346 residues: Probable electron transfer flavoprotein subunit alpha, mitochondrial (346 aa).

Residue 285–313 (LYVAIGISGAIQHLAGMKESKMIIAINKD) coordinates FAD.

Belongs to the ETF alpha-subunit/FixB family. Heterodimer of an alpha and a beta subunit. FAD serves as cofactor.

Its subcellular location is the mitochondrion matrix. In terms of biological role, the electron transfer flavoprotein serves as a specific electron acceptor for several dehydrogenases, including five acyl-CoA dehydrogenases, glutaryl-CoA and sarcosine dehydrogenase. It transfers the electrons to the main mitochondrial respiratory chain via ETF-ubiquinone oxidoreductase (ETF dehydrogenase). The chain is Probable electron transfer flavoprotein subunit alpha, mitochondrial (ETF1) from Cryptococcus neoformans var. neoformans serotype D (strain B-3501A) (Filobasidiella neoformans).